The sequence spans 520 residues: 2-isopropylmalate synthase (520 aa).

In terms of domain architecture, Pyruvate carboxyltransferase spans 12–274 (IRIFDTTLRD…DSAINTPRIV (263 aa)). Aspartate 21, histidine 209, histidine 211, and asparagine 245 together coordinate Mn(2+). The segment at 396-520 (RLASMTISDV…VVAGKTAAVA (125 aa)) is regulatory domain.

The protein belongs to the alpha-IPM synthase/homocitrate synthase family. LeuA type 1 subfamily. Homodimer. The cofactor is Mn(2+).

It is found in the cytoplasm. It catalyses the reaction 3-methyl-2-oxobutanoate + acetyl-CoA + H2O = (2S)-2-isopropylmalate + CoA + H(+). Its pathway is amino-acid biosynthesis; L-leucine biosynthesis; L-leucine from 3-methyl-2-oxobutanoate: step 1/4. In terms of biological role, catalyzes the condensation of the acetyl group of acetyl-CoA with 3-methyl-2-oxobutanoate (2-ketoisovalerate) to form 3-carboxy-3-hydroxy-4-methylpentanoate (2-isopropylmalate). In Xanthomonas euvesicatoria pv. vesicatoria (strain 85-10) (Xanthomonas campestris pv. vesicatoria), this protein is 2-isopropylmalate synthase.